Consider the following 386-residue polypeptide: Formate-dependent phosphoribosylglycinamide formyltransferase (386 aa).

N(1)-(5-phospho-beta-D-ribosyl)glycinamide is bound by residues 15–16 and glutamate 75; that span reads EL. Residues arginine 107, lysine 148, 153 to 158, 188 to 191, and glutamate 196 each bind ATP; these read SSGKGQ and EQFI. The 190-residue stretch at 112–301 folds into the ATP-grasp domain; sequence ALAAQQLNLQ…EFELHLRAIV (190 aa). Residues glutamate 260 and glutamate 272 each contribute to the Mg(2+) site. Residues aspartate 279, lysine 349, and 356–357 each bind N(1)-(5-phospho-beta-D-ribosyl)glycinamide; that span reads RR.

Belongs to the PurK/PurT family. Homodimer.

The enzyme catalyses N(1)-(5-phospho-beta-D-ribosyl)glycinamide + formate + ATP = N(2)-formyl-N(1)-(5-phospho-beta-D-ribosyl)glycinamide + ADP + phosphate + H(+). Its pathway is purine metabolism; IMP biosynthesis via de novo pathway; N(2)-formyl-N(1)-(5-phospho-D-ribosyl)glycinamide from N(1)-(5-phospho-D-ribosyl)glycinamide (formate route): step 1/1. Involved in the de novo purine biosynthesis. Catalyzes the transfer of formate to 5-phospho-ribosyl-glycinamide (GAR), producing 5-phospho-ribosyl-N-formylglycinamide (FGAR). Formate is provided by PurU via hydrolysis of 10-formyl-tetrahydrofolate. In Francisella tularensis subsp. tularensis (strain WY96-3418), this protein is Formate-dependent phosphoribosylglycinamide formyltransferase.